The primary structure comprises 375 residues: Lipid-A-disaccharide synthase (375 aa).

The protein belongs to the LpxB family.

It catalyses the reaction a lipid X + a UDP-2-N,3-O-bis[(3R)-3-hydroxyacyl]-alpha-D-glucosamine = a lipid A disaccharide + UDP + H(+). Its pathway is bacterial outer membrane biogenesis; LPS lipid A biosynthesis. In terms of biological role, condensation of UDP-2,3-diacylglucosamine and 2,3-diacylglucosamine-1-phosphate to form lipid A disaccharide, a precursor of lipid A, a phosphorylated glycolipid that anchors the lipopolysaccharide to the outer membrane of the cell. In Pseudomonas putida (strain W619), this protein is Lipid-A-disaccharide synthase.